Reading from the N-terminus, the 171-residue chain is MRYSKLTMLIPCALLLSACTTVTPAYKDNGTRSGPCVEGGPDNVAQQFYDYRILHRSNDITALRPYLSDKLATLLSDASRDNNHRELLTNDPFSSRTTLPDSAHVASASTIPNRDARNIPLRVDLKQGDQGWQDEVLMIQEGQCWVIDDVRYLGGSVHATAGTLRQSIENR.

Residues 1-18 (MRYSKLTMLIPCALLLSA) form the signal peptide. The N-palmitoyl cysteine moiety is linked to residue Cys19. The S-diacylglycerol cysteine moiety is linked to residue Cys19.

The protein resides in the cell membrane. This is an uncharacterized protein from Escherichia coli (strain K12).